The primary structure comprises 868 residues: LPS-assembly protein LptD (868 aa).

The N-terminal stretch at 1-24 is a signal peptide; sequence MLKGIHKYLLMCFGTVLFTVQANA.

This sequence belongs to the LptD family. As to quaternary structure, component of the lipopolysaccharide transport and assembly complex. Interacts with LptE and LptA.

It is found in the cell outer membrane. Together with LptE, is involved in the assembly of lipopolysaccharide (LPS) at the surface of the outer membrane. The chain is LPS-assembly protein LptD from Francisella tularensis subsp. holarctica (strain LVS).